The chain runs to 205 residues: Recombination protein RecR (205 aa).

A C4-type zinc finger spans residues 64 to 79; it reads CSRCYFITQGDLCAIC. The Toprim domain occupies 87–182; it reads RVICVVEEPL…RVTRLARGLP (96 aa).

Belongs to the RecR family.

Functionally, may play a role in DNA repair. It seems to be involved in an RecBC-independent recombinational process of DNA repair. It may act with RecF and RecO. The protein is Recombination protein RecR of Roseiflexus sp. (strain RS-1).